The following is a 256-amino-acid chain: Thiazole synthase (256 aa).

The Schiff-base intermediate with DXP role is filled by K102. Residues G163, 189–190 (AG), and 211–212 (AT) each bind 1-deoxy-D-xylulose 5-phosphate.

Belongs to the ThiG family. Homotetramer. Forms heterodimers with either ThiH or ThiS.

The protein localises to the cytoplasm. The enzyme catalyses [ThiS sulfur-carrier protein]-C-terminal-Gly-aminoethanethioate + 2-iminoacetate + 1-deoxy-D-xylulose 5-phosphate = [ThiS sulfur-carrier protein]-C-terminal Gly-Gly + 2-[(2R,5Z)-2-carboxy-4-methylthiazol-5(2H)-ylidene]ethyl phosphate + 2 H2O + H(+). It functions in the pathway cofactor biosynthesis; thiamine diphosphate biosynthesis. Functionally, catalyzes the rearrangement of 1-deoxy-D-xylulose 5-phosphate (DXP) to produce the thiazole phosphate moiety of thiamine. Sulfur is provided by the thiocarboxylate moiety of the carrier protein ThiS. In vitro, sulfur can be provided by H(2)S. The polypeptide is Thiazole synthase (Nocardia farcinica (strain IFM 10152)).